We begin with the raw amino-acid sequence, 145 residues long: Plastocyanin, chloroplastic (145 aa).

The N-terminal 48 residues, M1–A48, are a transit peptide targeting the chloroplast. The 97-residue stretch at A49 to Q145 folds into the Plastocyanin-like domain. 4 residues coordinate Cu cation: H85, C130, H133, and M138.

The protein belongs to the plastocyanin family. Cu(2+) serves as cofactor.

The protein resides in the plastid. Its subcellular location is the chloroplast thylakoid membrane. Participates in electron transfer between P700 and the cytochrome b6-f complex in photosystem I. This Tetradesmus obliquus (Green alga) protein is Plastocyanin, chloroplastic (PETE).